Here is a 20-residue protein sequence, read N- to C-terminus: Manganese peroxidase H5 (20 aa).

It belongs to the peroxidase family. Ligninase subfamily.

Its subcellular location is the secreted. The enzyme catalyses 2 Mn(2+) + H2O2 + 2 H(+) = 2 Mn(3+) + 2 H2O. Its function is as follows. Catalyzes the oxidation of Mn(2+) to Mn(3+). The latter, acting as a diffusible redox mediator, is capable of oxidizing a variety of lignin compounds. The protein is Manganese peroxidase H5 of Phanerodontia chrysosporium (White-rot fungus).